Here is a 114-residue protein sequence, read N- to C-terminus: Ribonuclease P protein component (114 aa).

This sequence belongs to the RnpA family. Consists of a catalytic RNA component (M1 or rnpB) and a protein subunit.

The catalysed reaction is Endonucleolytic cleavage of RNA, removing 5'-extranucleotides from tRNA precursor.. In terms of biological role, RNaseP catalyzes the removal of the 5'-leader sequence from pre-tRNA to produce the mature 5'-terminus. It can also cleave other RNA substrates such as 4.5S RNA. The protein component plays an auxiliary but essential role in vivo by binding to the 5'-leader sequence and broadening the substrate specificity of the ribozyme. In Borrelia duttonii (strain Ly), this protein is Ribonuclease P protein component.